A 217-amino-acid chain; its full sequence is uncharacterized protein (217 aa).

The PilZ domain occupies 98–203 (QRRQYVRTDA…GDQQALLQYC (106 aa)).

This is an uncharacterized protein from Bacillus subtilis (strain 168).